The following is a 553-amino-acid chain: Arginine--tRNA ligase (553 aa).

Residues 130–140 (ANPTGDLHIGH) carry the 'HIGH' region motif.

This sequence belongs to the class-I aminoacyl-tRNA synthetase family. In terms of assembly, monomer.

Its subcellular location is the cytoplasm. It catalyses the reaction tRNA(Arg) + L-arginine + ATP = L-arginyl-tRNA(Arg) + AMP + diphosphate. The chain is Arginine--tRNA ligase from Staphylococcus epidermidis (strain ATCC 12228 / FDA PCI 1200).